We begin with the raw amino-acid sequence, 176 residues long: HTH-type transcriptional regulator DctR (176 aa).

The 66-residue stretch at 109–174 (VPEAAVSLSR…ELVRHQHIDY (66 aa)) folds into the HTH luxR-type domain. Positions 133-152 (TEDILEKLKISLKTFYCHKH) form a DNA-binding region, H-T-H motif.

Its function is as follows. May act as a transcriptional regulator of dctA. The polypeptide is HTH-type transcriptional regulator DctR (dctR) (Escherichia coli (strain K12)).